An 81-amino-acid polypeptide reads, in one-letter code: Putative membrane protein insertion efficiency factor (81 aa).

Belongs to the UPF0161 family.

It localises to the cell inner membrane. In terms of biological role, could be involved in insertion of integral membrane proteins into the membrane. This chain is Putative membrane protein insertion efficiency factor, found in Legionella pneumophila (strain Lens).